Here is a 338-residue protein sequence, read N- to C-terminus: tRNA N6-adenosine threonylcarbamoyltransferase (338 aa).

The Fe cation site is built by histidine 111 and histidine 115. Substrate-binding positions include 133 to 137 (LVSGG), aspartate 166, glycine 179, aspartate 183, and asparagine 275. Aspartate 300 provides a ligand contact to Fe cation.

The protein belongs to the KAE1 / TsaD family. It depends on Fe(2+) as a cofactor.

It localises to the cytoplasm. It carries out the reaction L-threonylcarbamoyladenylate + adenosine(37) in tRNA = N(6)-L-threonylcarbamoyladenosine(37) in tRNA + AMP + H(+). Required for the formation of a threonylcarbamoyl group on adenosine at position 37 (t(6)A37) in tRNAs that read codons beginning with adenine. Is involved in the transfer of the threonylcarbamoyl moiety of threonylcarbamoyl-AMP (TC-AMP) to the N6 group of A37, together with TsaE and TsaB. TsaD likely plays a direct catalytic role in this reaction. In Treponema denticola (strain ATCC 35405 / DSM 14222 / CIP 103919 / JCM 8153 / KCTC 15104), this protein is tRNA N6-adenosine threonylcarbamoyltransferase.